We begin with the raw amino-acid sequence, 397 residues long: S-adenosylmethionine synthase (397 aa).

His17 is an ATP binding site. Residue Asp19 participates in Mg(2+) binding. Glu45 is a K(+) binding site. L-methionine contacts are provided by Glu58 and Gln101. Positions 101 to 111 (QSPDIAQGVDK) are flexible loop. ATP contacts are provided by residues 176–178 (DGK), 243–244 (RF), Asp252, 258–259 (RK), and Lys279. Asp252 serves as a coordination point for L-methionine. Residue Lys283 coordinates L-methionine.

Belongs to the AdoMet synthase family. In terms of assembly, homotetramer; dimer of dimers. The cofactor is Mg(2+). Requires K(+) as cofactor.

Its subcellular location is the cytoplasm. It catalyses the reaction L-methionine + ATP + H2O = S-adenosyl-L-methionine + phosphate + diphosphate. The protein operates within amino-acid biosynthesis; S-adenosyl-L-methionine biosynthesis; S-adenosyl-L-methionine from L-methionine: step 1/1. Its function is as follows. Catalyzes the formation of S-adenosylmethionine (AdoMet) from methionine and ATP. The overall synthetic reaction is composed of two sequential steps, AdoMet formation and the subsequent tripolyphosphate hydrolysis which occurs prior to release of AdoMet from the enzyme. The chain is S-adenosylmethionine synthase from Staphylococcus aureus (strain MRSA252).